A 958-amino-acid polypeptide reads, in one-letter code: Glycine dehydrogenase (decarboxylating) (958 aa).

Residue Lys-705 is modified to N6-(pyridoxal phosphate)lysine.

The protein belongs to the GcvP family. As to quaternary structure, the glycine cleavage system is composed of four proteins: P, T, L and H. Pyridoxal 5'-phosphate is required as a cofactor.

It catalyses the reaction N(6)-[(R)-lipoyl]-L-lysyl-[glycine-cleavage complex H protein] + glycine + H(+) = N(6)-[(R)-S(8)-aminomethyldihydrolipoyl]-L-lysyl-[glycine-cleavage complex H protein] + CO2. Its function is as follows. The glycine cleavage system catalyzes the degradation of glycine. The P protein binds the alpha-amino group of glycine through its pyridoxal phosphate cofactor; CO(2) is released and the remaining methylamine moiety is then transferred to the lipoamide cofactor of the H protein. The chain is Glycine dehydrogenase (decarboxylating) from Synechococcus sp. (strain CC9902).